The chain runs to 178 residues: Ribosome maturation factor RimP (178 aa).

The protein belongs to the RimP family.

It is found in the cytoplasm. Functionally, required for maturation of 30S ribosomal subunits. This Corynebacterium glutamicum (strain ATCC 13032 / DSM 20300 / JCM 1318 / BCRC 11384 / CCUG 27702 / LMG 3730 / NBRC 12168 / NCIMB 10025 / NRRL B-2784 / 534) protein is Ribosome maturation factor RimP.